Reading from the N-terminus, the 190-residue chain is Biphenyl-2,3-diol 1,2-dioxygenase 2 (190 aa).

The region spanning 6–124 (KFAHVVLQTS…DGNFVELQID (119 aa)) is the VOC domain. Fe cation is bound by residues His9, His72, and Glu120.

This sequence belongs to the extradiol ring-cleavage dioxygenase family. In terms of assembly, homohexamer. Fe(2+) is required as a cofactor.

It catalyses the reaction biphenyl-2,3-diol + O2 = 2-hydroxy-6-oxo-6-phenylhexa-2,4-dienoate + H(+). It participates in xenobiotic degradation; biphenyl degradation; 2-hydroxy-2,4-pentadienoate and benzoate from biphenyl: step 3/4. The protein is Biphenyl-2,3-diol 1,2-dioxygenase 2 (bphC2) of Rhodococcus globerulus.